The sequence spans 356 residues: Tyrosine recombinase XerS (356 aa).

Residues 16 to 121 form the Core-binding (CB) domain; sequence TMPWYILEYY…ALSSLYKYLT (106 aa). In terms of domain architecture, Tyr recombinase spans 169–354; sequence EFLQYIDREY…VNDEQKNALN (186 aa). Catalysis depends on residues Arg210, Lys234, His306, Arg309, and His332. Residue Tyr341 is the O-(3'-phospho-DNA)-tyrosine intermediate of the active site.

It belongs to the 'phage' integrase family. XerS subfamily.

Its subcellular location is the cytoplasm. With respect to regulation, ftsK is required for recombination. Site-specific tyrosine recombinase, which acts by catalyzing the cutting and rejoining of the recombining DNA molecules. Essential to convert dimers of the bacterial chromosome into monomers to permit their segregation at cell division. This Streptococcus gordonii (strain Challis / ATCC 35105 / BCRC 15272 / CH1 / DL1 / V288) protein is Tyrosine recombinase XerS.